We begin with the raw amino-acid sequence, 106 residues long: ATPase inhibitor, mitochondrial (106 aa).

Residues 1–25 (MAGSALAVRARFGVWGMKVLQTRGF) constitute a mitochondrion transit peptide. The N-terminal inhibitory region stretch occupies residues 26–52 (VSDSSDSMDTGAGSIREAGGAFGKREK). Residues 26–58 (VSDSSDSMDTGAGSIREAGGAFGKREKAEEDRY) are disordered. Phosphoserine is present on Ser-39. Residues 48–58 (GKREKAEEDRY) show a composition bias toward basic and acidic residues. Residues 60–106 (REKTKEQLAALRKHHEDEIDHHSKEIERLQKQIERHKKKIQQLKNNH) adopt a coiled-coil conformation. The antiparallel alpha-helical coiled coil region stretch occupies residues 74 to 106 (HEDEIDHHSKEIERLQKQIERHKKKIQQLKNNH). Lys-103 carries the N6-succinyllysine modification.

It belongs to the ATPase inhibitor family. As to quaternary structure, homodimer; represents the active form and is present at a pH value below 6.5. Homotetramer; represents the inactive form and is present at a pH value above 7.0.

The protein localises to the mitochondrion. In terms of biological role, endogenous F(1)F(o)-ATPase inhibitor limiting ATP depletion when the mitochondrial membrane potential falls below a threshold and the F(1)F(o)-ATP synthase starts hydrolyzing ATP to pump protons out of the mitochondrial matrix. Required to avoid the consumption of cellular ATP when the F(1)F(o)-ATP synthase enzyme acts as an ATP hydrolase. Indirectly acts as a regulator of heme synthesis in erythroid tissues: regulates heme synthesis by modulating the mitochondrial pH and redox potential, allowing FECH to efficiently catalyze the incorporation of iron into protoporphyrin IX to produce heme. This is ATPase inhibitor, mitochondrial from Mus musculus (Mouse).